Reading from the N-terminus, the 338-residue chain is 1-aminocyclopropane-1-carboxylate deaminase (338 aa).

Lysine 51 carries the N6-(pyridoxal phosphate)lysine modification. Residue serine 78 is the Nucleophile of the active site.

Belongs to the ACC deaminase/D-cysteine desulfhydrase family. As to quaternary structure, homotrimer. Pyridoxal 5'-phosphate is required as a cofactor.

The catalysed reaction is 1-aminocyclopropane-1-carboxylate + H2O = 2-oxobutanoate + NH4(+). In terms of biological role, catalyzes a cyclopropane ring-opening reaction, the irreversible conversion of 1-aminocyclopropane-1-carboxylate (ACC) to ammonia and alpha-ketobutyrate. Allows growth on ACC as a nitrogen source. This Methylibium petroleiphilum (strain ATCC BAA-1232 / LMG 22953 / PM1) protein is 1-aminocyclopropane-1-carboxylate deaminase.